Reading from the N-terminus, the 1356-residue chain is Kinesin-like protein KIF24 (1356 aa).

One can recognise an SAM domain in the interval 1–64; the sequence is MASWLYECLC…FQLIKIIKIM (64 aa). The interval 93–119 is disordered; it reads GPRRQLHFDSPSASKDKMANNETGSLS. Ser102 bears the Phosphoserine mark. The region spanning 218–541 is the Kinesin motor domain; sequence KIRVCVRKRP…LRYADRVKEL (324 aa). 308–315 is a binding site for ATP; it reads GQTGAGKT. Ser473 is modified (phosphoserine). Residues 473–702 form an interaction with MPHOSPH9 region; it reads SLLALKECIR…PTRGKKVQPV (230 aa). The span at 552-571 shows a compositional bias: polar residues; the sequence is TSQNQTSANASPKRIQSSPV. Disordered regions lie at residues 552–581, 597–664, 788–840, 897–947, and 964–998; these read TSQN…CSPK, PTKV…LCSE, EGRL…STAL, RGAL…HQKP, and VPEQ…DQRD. Ser579 carries the phosphoserine modification. Thr615 carries the post-translational modification Phosphothreonine; by NEK2. Residue Ser616 is modified to Phosphoserine; by NEK2. Ser640, Ser817, and Ser820 each carry phosphoserine. The segment covering 640–653 has biased composition (basic residues); the sequence is SPRKGTTRSGHSIK. Acidic residues predominate over residues 810–821; that stretch reads QAEDLDDSDFSE. A compositionally biased stretch (polar residues) spans 830-840; the sequence is QPAMKQGSTAL. Residues 970 to 979 show a composition bias toward polar residues; it reads GSLSSPSPEN. The residue at position 1008 (Ser1008) is a Phosphoserine. A disordered region spans residues 1109 to 1140; sequence LSSSPPDNRPSGDLPALSPSPIHQHSPDKLPG.

Belongs to the TRAFAC class myosin-kinesin ATPase superfamily. Kinesin family. In terms of assembly, interacts with CCP110, CEP97, TALPID3. Interacts with MPHOSPH9. As to expression, expressed in brain, spinal cord, and small intestine.

It localises to the cytoplasm. It is found in the cytoskeleton. The protein resides in the microtubule organizing center. The protein localises to the centrosome. Its subcellular location is the centriole. Microtubule-dependent motor protein that acts as a negative regulator of ciliogenesis by mediating recruitment of CCP110 to mother centriole in cycling cells, leading to restrict nucleation of cilia at centrioles. Mediates depolymerization of microtubules of centriolar origin, possibly to suppress aberrant cilia formation. Following activation by NEK2 involved in disassembly of primary cilium during G2/M phase but does not disassemble fully formed ciliary axonemes. As cilium assembly and disassembly is proposed to coexist in a dynamic equilibrium may suppress nascent cilium assembly and, potentially, ciliar re-assembly in cells that have already disassembled their cilia ensuring the completion of cilium removal in the later stages of the cell cycle. Plays an important role in recruiting MPHOSPH9, a negative regulator of cilia formation to the distal end of mother centriole. The chain is Kinesin-like protein KIF24 (Kif24) from Mus musculus (Mouse).